Here is a 231-residue protein sequence, read N- to C-terminus: Ureidoacrylate amidohydrolase RutB (231 aa).

The active-site Proton acceptor is aspartate 25. The active site involves lysine 134. Cysteine 167 acts as the Nucleophile in catalysis.

Belongs to the isochorismatase family. RutB subfamily.

The enzyme catalyses (Z)-3-ureidoacrylate + H2O + H(+) = (Z)-3-aminoacrylate + NH4(+) + CO2. It catalyses the reaction (Z)-3-ureidoacrylate + H2O = (Z)-3-aminoacrylate + carbamate + H(+). The catalysed reaction is (Z)-2-methylureidoacrylate + H2O + H(+) = (Z)-2-methylaminoacrylate + NH4(+) + CO2. Functionally, hydrolyzes ureidoacrylate to form aminoacrylate and carbamate. The carbamate hydrolyzes spontaneously, thereby releasing one of the nitrogen atoms of the pyrimidine ring as ammonia and one of its carbon atoms as CO2. This chain is Ureidoacrylate amidohydrolase RutB, found in Escherichia coli O18:K1:H7 (strain IHE3034 / ExPEC).